A 1488-amino-acid chain; its full sequence is MIERGKFRSLTLINWNGFFARTFDLDELVTTLSGGNGAGKSTTMAAFVTALIPDLTLLHFRNTTEAGATSGSRDKGLHGKLKAGVCYSMLDTINSRHQRVVVGVRLQQVAGRDRKVDIKPFAIQGLPMSVQPTQLVTETLNERQARVLSLAELKDKLDEMEGVQFKQFNSITDYHSLMFDLGIIARRLRSASDRSKFYRLIEASLYGGISSAITRSLRDYLLPENSGVRKAFQDMEAALRENRLTLEAIRVTQSDRDLFKHLISEATDYVAADYMRHANERRVHLDQALAFRRELYTSRKQLAAEQYKHVDMARELGEHNGAEGSLEADYQAASDHLNLVQTALRQQEKIERYEADLEELQIRLEEQNEVVAEAAEMQDENEARAEAAELEVDELKSQLADYQQALDVQQTRAIQYNQAISALARAKELCHLPDLTPESAAEWLDTFQAKEQEATEKLLSLEQKMSVAQTAHSQFEQAYQLVAAINGPLARSEAWDVARELLRDGVNQRHLAEQVQPLRMRLSELEQRLREQQEAERLLAEFCKRQGKNFDIDELEALHQELEARIASLSESVSSASEQRMALRQEQEQLQSRIQHLMQRAPVWLAAQNSLNQLSEQCGEEFTSSQEVTEYLQQLLEREREAIVERDEVGARKNAVDEEIERLSQPGGAEDQRLNALAERFGGVLLSEIYDDVSLEDAPYFSALYGPSRHAIVVPDLSQIAEQLEGLTDCPEDLYLIEGDPQSFDDSVFSVDELEKAVVVKIADRQWRYSRFPSLPIFGRAARENRIESLHAEREVLSERFATLSFDVQKTQRLHQAFSRFIGSHLSVAFEDDPEAEIRRLNGRRVELERALATHESDNQQQRLQFEQAKEGVSALNRLLPRLNLLADETLADRVDEIQERLDEAQEAARFVQQYGNQLAKLEPVVSVLQSDPEQFEQLKEDYAWSQQMQRDARQQAFALAEVVERRAHFSYSDSAEMLSGNSDLNEKLRQRLEQAEAERTRAREALRSHAAQLSQYSQVLASLKSSYDTKKELLNDLQRELQDIGVRADSGAEERARQRRDELHAQLSNNRSRRNQLEKALTFCEAEMENLTRKLRKLERDYHEMREQVVTAKAGWCAVMRMVKDNGVERRLHRRELAYLSADELRSMSDKALGALRLAVADNEHLRDVLRLSEDPKRPERKIQFFVAVYQHLRERIRQDIIRTDDPVEAIEQMEIELSRLTEELTSREQKLAISSRSVANIIRKTIQREQNRIRMLNQGLQSVSFGQVNSVRLNVNVRETHATLLDVLSEQQEQHQDLFNSNRLTFSEALAKLYQRLNPQIDMGQRTPQTIGEELLDYRNYLEMEVEVNRGSDGWLRAESGALSTGEAIGTGMSILVMVVQSWEDEARRLRGKDISPCRLLFLDEAARLDARSIATLFELCERLQMQLIIAAPENISPEKGTTYKLVRKVFQNTEHVHVVGLRGFAPQLPETLPGTQTEDTPSEAS.

34–41 (GGNGAGKS) serves as a coordination point for ATP. Coiled-coil stretches lie at residues 326-418 (LEAD…QYNQ), 444-472 (LDTF…QTAH), and 509-602 (RHLA…QRAP). The segment at 666–783 (PGGAEDQRLN…SLPIFGRAAR (118 aa)) is flexible hinge. 3 coiled-coil regions span residues 835-923 (EAEI…AKLE), 977-1116 (EMLS…AKAG), and 1209-1265 (VEAI…LQSV). The segment at 1049 to 1074 (ADSGAEERARQRRDELHAQLSNNRSR) is disordered. Over residues 1051-1065 (SGAEERARQRRDELH) the composition is skewed to basic and acidic residues.

It belongs to the SMC family. MukB subfamily. Homodimerization via its hinge domain. Binds to DNA via its C-terminal region. Interacts, and probably forms a ternary complex, with MukE and MukF via its C-terminal region. The complex formation is stimulated by calcium or magnesium. Interacts with tubulin-related protein FtsZ.

The protein resides in the cytoplasm. It is found in the nucleoid. Functionally, plays a central role in chromosome condensation, segregation and cell cycle progression. Functions as a homodimer, which is essential for chromosome partition. Involved in negative DNA supercoiling in vivo, and by this means organize and compact chromosomes. May achieve or facilitate chromosome segregation by condensation DNA from both sides of a centrally located replisome during cell division. The sequence is that of Chromosome partition protein MukB from Salmonella enteritidis PT4 (strain P125109).